The following is a 92-amino-acid chain: Acylphosphatase (92 aa).

Residues 7–92 (KTRCTISGRV…DPAPAEFSVG (86 aa)) form the Acylphosphatase-like domain. Active-site residues include R22 and N40.

The protein belongs to the acylphosphatase family.

It catalyses the reaction an acyl phosphate + H2O = a carboxylate + phosphate + H(+). In Halorhodospira halophila (strain DSM 244 / SL1) (Ectothiorhodospira halophila (strain DSM 244 / SL1)), this protein is Acylphosphatase (acyP).